Consider the following 250-residue polypeptide: Large ribosomal subunit protein uL29m (250 aa).

Lysine 144 carries the post-translational modification N6-acetyllysine.

Belongs to the universal ribosomal protein uL29 family. As to quaternary structure, component of the mitochondrial large ribosomal subunit (mt-LSU). Mature mammalian 55S mitochondrial ribosomes consist of a small (28S) and a large (39S) subunit. The 28S small subunit contains a 12S ribosomal RNA (12S mt-rRNA) and 30 different proteins. The 39S large subunit contains a 16S rRNA (16S mt-rRNA), a copy of mitochondrial valine transfer RNA (mt-tRNA(Val)), which plays an integral structural role, and 52 different proteins.

The protein localises to the mitochondrion. This is Large ribosomal subunit protein uL29m (MRPL47) from Homo sapiens (Human).